Reading from the N-terminus, the 72-residue chain is Large ribosomal subunit protein bL31 (72 aa).

Residues C17, C19, C37, and C40 each contribute to the Zn(2+) site.

This sequence belongs to the bacterial ribosomal protein bL31 family. Type A subfamily. In terms of assembly, part of the 50S ribosomal subunit. Zn(2+) is required as a cofactor.

Functionally, binds the 23S rRNA. The chain is Large ribosomal subunit protein bL31 from Clostridium botulinum (strain Loch Maree / Type A3).